The chain runs to 281 residues: Nuclear transcription factor Y subunit nfya-2 (281 aa).

2 disordered regions span residues 1–27 (MNPRGNPSKMPTQIVLNRRPAAPARPQ) and 163–261 (REMR…VQEE). Positions 150–173 (MVNPRQYKRIIKRREMRQKMEDSG) match the Subunit association domain (SAD) motif. Basic and acidic residues predominate over residues 166 to 188 (RQKMEDSGRLPLERQKYMHESRR). The NFYA/HAP2-type DNA-binding region spans 180–204 (QKYMHESRRQHALKRRRTGGRFDAN). The span at 189–198 (QHALKRRRTG) shows a compositional bias: basic residues. The span at 204–220 (NAEAAAASSEPSISSAA) shows a compositional bias: low complexity.

It belongs to the NFYA/HAP2 subunit family. As to quaternary structure, forms a heterotrimeric transcription factor complex (nfya-2-NF-Y complex) composed of nfya-2, nfyb-1 and nfyc-1. Interacts with the nfyb-1 and nfyc-1 dimer; the interaction is required for subsequent binding to the 5'-CCAAT-3' box motif in DNA. Does not interact with either nfyb-1 or nfyc-1 in their monomeric form. Highly expressed in certain parts of the gonads. Expressed in the spermatheca, intestine and in some neurons in the head. Not expressed in the intestine, the hypodermis, body wall muscle surrounding the pseudocoelomic space, secretory cells in the pharyngeal terminal bulb wall, in the small ganglia surrounding the pharynx and in the neurons running anteriorly to the sensory organs in the head.

It localises to the nucleus. Functionally, component of the sequence-specific heterotrimeric transcription factor (nfya-2-NF-Y) which specifically recognizes a 5'-CCAAT-3' box motif found in the promoters of its target genes to regulate their expression and control cellular identity in particular tissue types. In association with the components in the nfya-2-NF-Y complex, may repress the expression of the T-box transcription factor tbx-2 throughout larval development, which most likely restricts its expression to certain tissues. The polypeptide is Nuclear transcription factor Y subunit nfya-2 (Caenorhabditis elegans).